Reading from the N-terminus, the 503-residue chain is Carboxyl-terminal PDZ ligand of neuronal nitric oxide synthase protein (503 aa).

The 166-residue stretch at 26–191 (FQHGISFEAK…ESERNSDGSG (166 aa)) folds into the PID domain. The segment at 170 to 212 (HTQQNADGQEDGESERNSDGSGDPGRQLTGAERVSTAAAEETD) is disordered. Phosphoserine occurs at positions 183, 187, 190, and 262. The stretch at 318–359 (AAEAAARLEAQARVHQLLLQNKDMLQHISLLVKQVQELELKL) forms a coiled coil. Phosphoserine occurs at positions 367, 370, 397, and 413. Residues 491–503 (QELGDSLDDEIAV) form an interaction with NOS1 region. A PDZ-binding motif is present at residues 501-503 (IAV).

Interacts with the PDZ domain of NOS1 or the second PDZ domain of DLG4 through its C-terminus. Interacts with RASD1 and SYN1, SYN2 and SYN3 via its PID domain. Forms a ternary complex with NOS1 and SYN1. Forms a ternary complex with NOS1 and RASD1.

It localises to the cell projection. The protein resides in the filopodium. Its subcellular location is the podosome. Functionally, adapter protein involved in neuronal nitric-oxide (NO) synthesis regulation via its association with nNOS/NOS1. The complex formed with NOS1 and synapsins is necessary for specific NO and synapsin functions at a presynaptic level. Mediates an indirect interaction between NOS1 and RASD1 leading to enhance the ability of NOS1 to activate RASD1. Competes with DLG4 for interaction with NOS1, possibly affecting NOS1 activity by regulating the interaction between NOS1 and DLG4. In kidney podocytes, plays a role in podosomes and filopodia formation through CDC42 activation. The polypeptide is Carboxyl-terminal PDZ ligand of neuronal nitric oxide synthase protein (Mus musculus (Mouse)).